The chain runs to 430 residues: Enolase (430 aa).

Glutamine 164 lines the (2R)-2-phosphoglycerate pocket. Glutamate 208 functions as the Proton donor in the catalytic mechanism. Mg(2+) is bound by residues aspartate 245, glutamate 288, and aspartate 315. Positions 340, 369, 370, and 391 each coordinate (2R)-2-phosphoglycerate. The active-site Proton acceptor is the lysine 340.

It belongs to the enolase family. It depends on Mg(2+) as a cofactor.

The protein resides in the cytoplasm. Its subcellular location is the secreted. The protein localises to the cell surface. It catalyses the reaction (2R)-2-phosphoglycerate = phosphoenolpyruvate + H2O. The protein operates within carbohydrate degradation; glycolysis; pyruvate from D-glyceraldehyde 3-phosphate: step 4/5. In terms of biological role, catalyzes the reversible conversion of 2-phosphoglycerate (2-PG) into phosphoenolpyruvate (PEP). It is essential for the degradation of carbohydrates via glycolysis. The polypeptide is Enolase (Thermococcus gammatolerans (strain DSM 15229 / JCM 11827 / EJ3)).